A 45-amino-acid polypeptide reads, in one-letter code: Large ribosomal subunit protein bL34 (45 aa).

The disordered stretch occupies residues 1–45 (MTKRTFGGTSRKRKRVSGFRVRMRTHTGRSVIRSRRKKGRSRIAV). Over residues 10-45 (SRKRKRVSGFRVRMRTHTGRSVIRSRRKKGRSRIAV) the composition is skewed to basic residues.

The protein belongs to the bacterial ribosomal protein bL34 family.

The chain is Large ribosomal subunit protein bL34 from Prochlorococcus marinus (strain SARG / CCMP1375 / SS120).